The sequence spans 467 residues: NALCN channel auxiliary factor 1 (467 aa).

A helical membrane pass occupies residues 40–60 (LSLASLLFFTVLLSDHLWFCA). The interval 121-161 (MGESSPAAQAHRLLSASSSPTLPPSPGGGGGSKGNRGKNNR) is disordered. Asparagine 160, asparagine 226, and asparagine 254 each carry an N-linked (GlcNAc...) asparagine glycan. 7 disulfides stabilise this stretch: cysteine 200–cysteine 270, cysteine 235–cysteine 322, cysteine 255–cysteine 270, cysteine 313–cysteine 350, cysteine 333–cysteine 386, cysteine 339–cysteine 385, and cysteine 343–cysteine 370. Residues 390–408 (SEEQTAPRPKGTVDRRDSC) are compositionally biased toward basic and acidic residues. The interval 390–409 (SEEQTAPRPKGTVDRRDSCP) is disordered. The chain crosses the membrane as a helical span at residues 426–446 (LKLCVLVLILLHTVLTASAAQ). N-linked (GlcNAc...) asparagine glycosylation is present at asparagine 462.

Belongs to the NALF family. As to quaternary structure, component of the NALCN channel complex. NALCN complex consists of NALCN and auxiliary subunits, UNC79, UNC80 and NACL1. These auxiliary subunits are essential for the NALCN channel function.

It is found in the cell membrane. Auxillary component of the NALCN sodium channel complex, a channel that regulates the resting membrane potential and controls neuronal excitability. This is NALCN channel auxiliary factor 1 from Mus musculus (Mouse).